Reading from the N-terminus, the 675-residue chain is L-type lectin-domain containing receptor kinase IV.1 (675 aa).

Positions Met-1 to Ser-22 are cleaved as a signal peptide. Residues Gln-23–Lys-291 lie on the Extracellular side of the membrane. Positions Leu-25–Phe-261 are legume-lectin like. N-linked (GlcNAc...) asparagine glycans are attached at residues Asn-57, Asn-79, Asn-112, Asn-134, Asn-153, and Asn-186. The helical transmembrane segment at Ile-292–Ile-312 threads the bilayer. At Val-313–Arg-675 the chain is on the cytoplasmic side. The region spanning Phe-347–Leu-624 is the Protein kinase domain. ATP is bound by residues Leu-353–Val-361 and Lys-376. Asp-472 acts as the Proton acceptor in catalysis.

This sequence in the C-terminal section; belongs to the protein kinase superfamily. Ser/Thr protein kinase family. In the N-terminal section; belongs to the leguminous lectin family.

Its subcellular location is the membrane. It carries out the reaction L-seryl-[protein] + ATP = O-phospho-L-seryl-[protein] + ADP + H(+). The catalysed reaction is L-threonyl-[protein] + ATP = O-phospho-L-threonyl-[protein] + ADP + H(+). The chain is L-type lectin-domain containing receptor kinase IV.1 (LECRK41) from Arabidopsis thaliana (Mouse-ear cress).